The sequence spans 106 residues: Pyrimidine/purine nucleoside phosphorylase (106 aa).

Belongs to the nucleoside phosphorylase PpnP family.

It catalyses the reaction a purine D-ribonucleoside + phosphate = a purine nucleobase + alpha-D-ribose 1-phosphate. The catalysed reaction is adenosine + phosphate = alpha-D-ribose 1-phosphate + adenine. The enzyme catalyses cytidine + phosphate = cytosine + alpha-D-ribose 1-phosphate. It carries out the reaction guanosine + phosphate = alpha-D-ribose 1-phosphate + guanine. It catalyses the reaction inosine + phosphate = alpha-D-ribose 1-phosphate + hypoxanthine. The catalysed reaction is thymidine + phosphate = 2-deoxy-alpha-D-ribose 1-phosphate + thymine. The enzyme catalyses uridine + phosphate = alpha-D-ribose 1-phosphate + uracil. It carries out the reaction xanthosine + phosphate = alpha-D-ribose 1-phosphate + xanthine. Catalyzes the phosphorolysis of diverse nucleosides, yielding D-ribose 1-phosphate and the respective free bases. Can use uridine, adenosine, guanosine, cytidine, thymidine, inosine and xanthosine as substrates. Also catalyzes the reverse reactions. In Burkholderia ambifaria (strain ATCC BAA-244 / DSM 16087 / CCUG 44356 / LMG 19182 / AMMD) (Burkholderia cepacia (strain AMMD)), this protein is Pyrimidine/purine nucleoside phosphorylase.